The primary structure comprises 130 residues: Small ribosomal subunit protein uS9 (130 aa).

It belongs to the universal ribosomal protein uS9 family.

The protein is Small ribosomal subunit protein uS9 of Aliivibrio salmonicida (strain LFI1238) (Vibrio salmonicida (strain LFI1238)).